A 160-amino-acid chain; its full sequence is Small ribosomal subunit protein uS7 (160 aa).

Belongs to the universal ribosomal protein uS7 family. In terms of assembly, part of the 30S ribosomal subunit. Contacts proteins S9 and S11.

Its function is as follows. One of the primary rRNA binding proteins, it binds directly to 16S rRNA where it nucleates assembly of the head domain of the 30S subunit. Is located at the subunit interface close to the decoding center, probably blocks exit of the E-site tRNA. The chain is Small ribosomal subunit protein uS7 from Rickettsia akari (strain Hartford).